The sequence spans 100 residues: MNLSPREKDKLLISMAAMVARRRLERGVKLNYPEAIALISDFVVEGARDGRAVSELMEAGAHVITRDQVMDGIAEMIHDVQVEATFPDGTKLVTVHEPIR.

It belongs to the urease gamma subunit family. As to quaternary structure, heterotrimer of UreA (gamma), UreB (beta) and UreC (alpha) subunits. Three heterotrimers associate to form the active enzyme.

The protein resides in the cytoplasm. The catalysed reaction is urea + 2 H2O + H(+) = hydrogencarbonate + 2 NH4(+). It participates in nitrogen metabolism; urea degradation; CO(2) and NH(3) from urea (urease route): step 1/1. This Allorhizobium ampelinum (strain ATCC BAA-846 / DSM 112012 / S4) (Agrobacterium vitis (strain S4)) protein is Urease subunit gamma.